The following is a 268-amino-acid chain: EFSEPSFITESYQTLHPISSEELLSLKYESDYPLGLLRDPLQPESLQGDYFTIKQEVVSPDNMCLGRISRGKLGGQESFESIESHDSCDRLTQSWSSQSSYNSLQRVPSYDSFDSEDYPPALPSHKSKGTFKDYVRDRAELNKDKPVIPAAALAGYTGSGPIQLWQFLLELLTDKSCQSFISWTGDGWEFKLSDPDEVARRWGKRKNKPKMNYEKLSRGLRYYYDKNIIHKTAGKRYVYRFVCDLQSLLGYVPEELHAMLDVKPDTDE.

Residues 131 to 139 (FKDYVRDRA) are helix HI-1. The segment at 150-157 (AAALAGYT) is helix HI-2. The segment at residues 162 to 242 (IQLWQFLLEL…AGKRYVYRFV (81 aa)) is a DNA-binding region (ETS). Residues 245-249 (LQSLL) form a helix H4 region. The helix H5 stretch occupies residues 253-259 (PEELHAM).

This sequence belongs to the ETS family. Binds DNA as a homodimer; homodimerization is required for transcription activation.

It localises to the nucleus. The protein resides in the cytoplasm. Autoinhibited by a module composed of four alpha helices (HI-1, HI-2, H4, and H5) that flank the DNA-binding ETS domain, reducing the affinity for DNA. Transcription factor. Directly controls the expression of cytokine and chemokine genes in a wide variety of different cellular contexts. This Xenopus laevis (African clawed frog) protein is Protein c-ets-1-B (ets1-b).